Here is a 312-residue protein sequence, read N- to C-terminus: MNTPKSFFWAQEYFTPWDYTARAITRILAYRKTRFQEMLIAETGAYGKGLMLDGHWQSTTADEFLYHEALVHPALVQVVQAGGIPRRVLILGGAEGATLREVLRWRSVEQVVMVDIDGEVVEACREHLPEMHQGSFADPRAEVVIADALDFLGQTEPIWDAILSDLSDPVEAGPAYRLFTQEFFRQVRSKLQTAGAFVIQAGPTGPVELWQHTRIVHTLKTVFAAVQPYAIYAPTYGGPLGFALAAQDPISSRPEPEQVDQILAQHLDPDRGALRFIDGITLLGLYQVPAHLRRAIAAETTVYTLANPPQVE.

Residues 7–247 form the PABS domain; that stretch reads FFWAQEYFTP…GPLGFALAAQ (241 aa). S-methyl-5'-thioadenosine is bound at residue Gln36. 2 residues coordinate spermidine: His67 and Glu95. S-methyl-5'-thioadenosine-binding positions include Asp115 and 147–148; that span reads DA. The active-site Proton acceptor is the Asp165. Pro174 lines the S-methyl-5'-thioadenosine pocket.

Belongs to the spermidine/spermine synthase family. In terms of assembly, homodimer or homotetramer.

It is found in the cytoplasm. It carries out the reaction S-adenosyl 3-(methylsulfanyl)propylamine + putrescine = S-methyl-5'-thioadenosine + spermidine + H(+). Its pathway is amine and polyamine biosynthesis; spermidine biosynthesis; spermidine from putrescine: step 1/1. Functionally, catalyzes the irreversible transfer of a propylamine group from the amino donor S-adenosylmethioninamine (decarboxy-AdoMet) to putrescine (1,4-diaminobutane) to yield spermidine. The protein is Polyamine aminopropyltransferase of Synechococcus sp. (strain JA-3-3Ab) (Cyanobacteria bacterium Yellowstone A-Prime).